We begin with the raw amino-acid sequence, 244 residues long: MRLIQNMSTIAEYPSADCPSSRVIKIAVIGGSGVGKTALVVRFLTKRFIGDYERNVGNLYSREVQIDGEQVAIQVQDTPGVQVNANGLSCTDHVSRSIQWADAVVMVYSVTDRKSFDLIGQLHQLVTRTHSDRSIPIILVANKADLLHVRRVDAQEGPVLSSALSCSFYEVSASEDYNQVHSAFHRLCVDLAKLQPQTPINATSSVTEKKRSPLIPRPKSPNMQDLKRRFKQVLSAKVRTVTSV.

A small GTPase-like region spans residues 19–242 (PSSRVIKIAV…VLSAKVRTVT (224 aa)). GTP-binding positions include 30-37 (GGSGVGKT), 77-81 (DTPGV), and 142-145 (NKAD). The tract at residues 200–222 (INATSSVTEKKRSPLIPRPKSPN) is disordered.

This sequence belongs to the small GTPase superfamily. Ras family.

The catalysed reaction is GTP + H2O = GDP + phosphate + H(+). This Danio rerio (Zebrafish) protein is Ras-like protein family member 11B.